A 487-amino-acid chain; its full sequence is MPMPLNQLLPAAESGVLIRELTLDSRKVRPGDLFLAVPGTQQDGRVHIADAVARGAAAVAFEAEGAAPMHAESAVLVPVKGLAGQLSAIAGRFYGEPSRALHLIGVTGTNGKTSVSQLLAQALDLLGERCGIVGTLGTGFHGALEQGKHTTPDPVGVQATLASLKQAGARAVAMEVSSHGLDQGRVAALEFDVAVFTNLSRDHLDYHGSMEAYGAAKAKLFAWPNLRCRVINLDDAFGRELAQQAHDSRLIGYSLSDASAFLYCSEAQFDDHGVRARLVTPRGEGVLRSNLLGRFNLSNLLAVVGALLGMDYGLDEILKVLPQLQGPAGRMQRLGGGDKPLVVVDYAHTPDALEKVLEAMRPHVQGRLVCLFGCGGDRDRGKRPLMAAVAERLADVVWVTDDNPRSEDPAQIVADIRAGFCAPEQVQFIHGRGDAIARLIAQAEAADVLVLAGKGHEDYQEITGVRHPFSDLIEANEALAAWEAAHA.

2 residues coordinate UDP-N-acetyl-alpha-D-muramoyl-L-alanyl-D-glutamate: Leu23 and Ser25. Residue 108-114 (GTNGKTS) participates in ATP binding. Residues 150–151 (TT), Ser177, Gln183, and Arg185 contribute to the UDP-N-acetyl-alpha-D-muramoyl-L-alanyl-D-glutamate site. N6-carboxylysine is present on Lys217. Meso-2,6-diaminopimelate is bound by residues Arg378, 402–405 (DNPR), Gly453, and Glu457. A Meso-diaminopimelate recognition motif motif is present at residues 402–405 (DNPR).

Belongs to the MurCDEF family. MurE subfamily. Mg(2+) serves as cofactor. Carboxylation is probably crucial for Mg(2+) binding and, consequently, for the gamma-phosphate positioning of ATP.

It is found in the cytoplasm. It catalyses the reaction UDP-N-acetyl-alpha-D-muramoyl-L-alanyl-D-glutamate + meso-2,6-diaminopimelate + ATP = UDP-N-acetyl-alpha-D-muramoyl-L-alanyl-gamma-D-glutamyl-meso-2,6-diaminopimelate + ADP + phosphate + H(+). It participates in cell wall biogenesis; peptidoglycan biosynthesis. Functionally, catalyzes the addition of meso-diaminopimelic acid to the nucleotide precursor UDP-N-acetylmuramoyl-L-alanyl-D-glutamate (UMAG) in the biosynthesis of bacterial cell-wall peptidoglycan. This is UDP-N-acetylmuramoyl-L-alanyl-D-glutamate--2,6-diaminopimelate ligase from Ectopseudomonas mendocina (strain ymp) (Pseudomonas mendocina).